The sequence spans 396 residues: ATP-dependent RNA helicase eIF4A (396 aa).

A Q motif motif is present at residues 22 to 50; it reads HKFDELKLKEVLLRGIYGYGFVDPSAIQQ. The 171-residue stretch at 53-223 folds into the Helicase ATP-binding domain; it reads ILPIIEGHDV…DKFMNKPVRI (171 aa). 66-73 is an ATP binding site; the sequence is AQSGTGKT. Residues 171-174 carry the DEAD box motif; the sequence is DEAD. The region spanning 234-395 is the Helicase C-terminal domain; the sequence is GIQQYYINVE…ELPANIADLF (162 aa).

Belongs to the DEAD box helicase family. eIF4A subfamily. As to quaternary structure, component of the eIF4F complex, which composition varies with external and internal environmental conditions. It is composed of at least eIF4A, eIF4E and eIF4G.

The protein localises to the cytoplasm. It carries out the reaction ATP + H2O = ADP + phosphate + H(+). Its function is as follows. ATP-dependent RNA helicase which is a subunit of the eIF4F complex involved in cap recognition and is required for mRNA binding to ribosome. In the current model of translation initiation, eIF4A unwinds RNA secondary structures in the 5'-UTR of mRNAs which is necessary to allow efficient binding of the small ribosomal subunit, and subsequent scanning for the initiator codon. This is ATP-dependent RNA helicase eIF4A (TIF1) from Eremothecium gossypii (strain ATCC 10895 / CBS 109.51 / FGSC 9923 / NRRL Y-1056) (Yeast).